A 177-amino-acid chain; its full sequence is Large ribosomal subunit protein uL6 (177 aa).

It belongs to the universal ribosomal protein uL6 family. In terms of assembly, part of the 50S ribosomal subunit.

Its function is as follows. This protein binds to the 23S rRNA, and is important in its secondary structure. It is located near the subunit interface in the base of the L7/L12 stalk, and near the tRNA binding site of the peptidyltransferase center. This is Large ribosomal subunit protein uL6 from Micrococcus luteus (strain ATCC 4698 / DSM 20030 / JCM 1464 / CCM 169 / CCUG 5858 / IAM 1056 / NBRC 3333 / NCIMB 9278 / NCTC 2665 / VKM Ac-2230) (Micrococcus lysodeikticus).